Reading from the N-terminus, the 309-residue chain is UDP-N-acetylenolpyruvoylglucosamine reductase (309 aa).

The FAD-binding PCMH-type domain maps to arginine 25 to glutamate 188. Residue arginine 168 is part of the active site. The tract at residues alanine 202 to alanine 231 is disordered. Positions threonine 207 to alanine 231 are enriched in polar residues. Catalysis depends on serine 217, which acts as the Proton donor. Residue glutamate 299 is part of the active site.

It belongs to the MurB family. FAD is required as a cofactor.

It localises to the cytoplasm. It carries out the reaction UDP-N-acetyl-alpha-D-muramate + NADP(+) = UDP-N-acetyl-3-O-(1-carboxyvinyl)-alpha-D-glucosamine + NADPH + H(+). It participates in cell wall biogenesis; peptidoglycan biosynthesis. Its function is as follows. Cell wall formation. In Jannaschia sp. (strain CCS1), this protein is UDP-N-acetylenolpyruvoylglucosamine reductase.